We begin with the raw amino-acid sequence, 754 residues long: C2H2 finger domain transcription factor crzA (754 aa).

Disordered stretches follow at residues 1-51, 63-150, 187-227, 269-299, and 384-543; these read MASQ…TVTG, SFAN…FSDL, VHQQ…QGST, QGHR…FDGV, and GAEG…RVQK. Residues 30–44 are compositionally biased toward low complexity; it reads HQQQQQQQHQQHQGQ. 2 stretches are compositionally biased toward polar residues: residues 63–80 and 94–114; these read SFAN…SPSA and TPAS…QSYG. Low complexity predominate over residues 130 to 140; it reads QQQSQQQHHQQ. A compositionally biased stretch (polar residues) spans 141–150; that stretch reads PSLDDNFSDL. A compositionally biased stretch (low complexity) spans 189-209; sequence QQSHPTQIPSSHSSTSPQISP. Composition is skewed to polar residues over residues 210–227 and 279–293; these read LEQQ…QGST and SEIS…LSQH. 2 stretches are compositionally biased toward low complexity: residues 459–472 and 491–515; these read STSR…SSSL and RQQQ…STSS. C2H2-type zinc fingers lie at residues 548 to 570 and 576 to 598; these read FQCN…LRTH and FVCT…EGLH. Residues 604–635 form a C2H2-type 3; degenerate zinc finger; it reads FVCQGELSRGGQWGCGRRFARADALGRHFRSE. The disordered stretch occupies residues 708–737; sequence ADDPSDIGGRSSFDASSGNEFGFEDDDSGL.

It localises to the nucleus. The protein resides in the cytoplasm. Its function is as follows. Transcription factor involved in the regulation of calcium ion homeostasis. Regulates genes encoding calcium transporters, transcription factors and genes that could be directly or indirectly involved in calcium metabolism. Supports especially pmcA, pmcB and pmcC expression encoding for calcium-translocating P-type ATPases. Binds target promoters at motif A[GT][CG]CA[AC][AG]. Plays an essential role germination, radial growth, and asexual development. Also plays a major role in proper chitin and glucan incorporation into the cell wall. Involved in the high-osmolarity glycerol response (HOG) signaling pathway. Required for pathogenicity in an experimental murine model of invasive pulmonary aspergillosis. This Aspergillus fumigatus (strain ATCC MYA-4609 / CBS 101355 / FGSC A1100 / Af293) (Neosartorya fumigata) protein is C2H2 finger domain transcription factor crzA.